We begin with the raw amino-acid sequence, 202 residues long: Nuclear transcription factor Y subunit C-6 (202 aa).

A compositionally biased stretch (low complexity) spans 1–16; that stretch reads MAENNNNNGDNMNNDN. Disordered regions lie at residues 1-29 and 180-202; these read MAEN…LPPM and AWPA…GGGN. The segment covering 17–29 has biased composition (polar residues); that stretch reads HQQPPSYSQLPPM.

Belongs to the NFYC/HAP5 subunit family. Heterotrimeric transcription factor composed of three components, NF-YA, NF-YB and NF-YC. NF-YB and NF-YC must interact and dimerize for NF-YA association and DNA binding. As to expression, expressed in flowers and siliques.

The protein resides in the nucleus. Functionally, stimulates the transcription of various genes by recognizing and binding to a CCAAT motif in promoters. This is Nuclear transcription factor Y subunit C-6 (NFYC6) from Arabidopsis thaliana (Mouse-ear cress).